Reading from the N-terminus, the 590-residue chain is Aspartate--tRNA(Asp/Asn) ligase (590 aa).

Glu175 lines the L-aspartate pocket. The interval 199–202 is aspartate; it reads QQYK. L-aspartate is bound by residues Arg221 and His450. ATP is bound at residue 221-223; it reads RDE. Glu484 lines the ATP pocket. Arg491 is an L-aspartate binding site. Residue 536 to 539 coordinates ATP; that stretch reads GVDR.

This sequence belongs to the class-II aminoacyl-tRNA synthetase family. Type 1 subfamily. Homodimer.

Its subcellular location is the cytoplasm. It carries out the reaction tRNA(Asx) + L-aspartate + ATP = L-aspartyl-tRNA(Asx) + AMP + diphosphate. Aspartyl-tRNA synthetase with relaxed tRNA specificity since it is able to aspartylate not only its cognate tRNA(Asp) but also tRNA(Asn). Reaction proceeds in two steps: L-aspartate is first activated by ATP to form Asp-AMP and then transferred to the acceptor end of tRNA(Asp/Asn). The polypeptide is Aspartate--tRNA(Asp/Asn) ligase (Bradyrhizobium diazoefficiens (strain JCM 10833 / BCRC 13528 / IAM 13628 / NBRC 14792 / USDA 110)).